The primary structure comprises 495 residues: UDP-N-acetylmuramoyl-L-alanyl-D-glutamate--2,6-diaminopimelate ligase (495 aa).

UDP-N-acetyl-alpha-D-muramoyl-L-alanyl-D-glutamate contacts are provided by residues Leu-27, Ser-29, and 44–46 (HQT). 116–122 (GTNGKTT) lines the ATP pocket. UDP-N-acetyl-alpha-D-muramoyl-L-alanyl-D-glutamate-binding positions include Asn-157, 158–159 (TT), Ser-185, Gln-191, and Arg-193. Lys-225 carries the post-translational modification N6-carboxylysine. Residues Arg-390, 414–417 (DNPR), Gly-465, and Glu-469 contribute to the meso-2,6-diaminopimelate site. Residues 414–417 (DNPR) carry the Meso-diaminopimelate recognition motif motif.

The protein belongs to the MurCDEF family. MurE subfamily. It depends on Mg(2+) as a cofactor. In terms of processing, carboxylation is probably crucial for Mg(2+) binding and, consequently, for the gamma-phosphate positioning of ATP.

It is found in the cytoplasm. It catalyses the reaction UDP-N-acetyl-alpha-D-muramoyl-L-alanyl-D-glutamate + meso-2,6-diaminopimelate + ATP = UDP-N-acetyl-alpha-D-muramoyl-L-alanyl-gamma-D-glutamyl-meso-2,6-diaminopimelate + ADP + phosphate + H(+). It participates in cell wall biogenesis; peptidoglycan biosynthesis. Its function is as follows. Catalyzes the addition of meso-diaminopimelic acid to the nucleotide precursor UDP-N-acetylmuramoyl-L-alanyl-D-glutamate (UMAG) in the biosynthesis of bacterial cell-wall peptidoglycan. The polypeptide is UDP-N-acetylmuramoyl-L-alanyl-D-glutamate--2,6-diaminopimelate ligase (Sodalis glossinidius (strain morsitans)).